The following is a 648-amino-acid chain: EF-hand domain-containing protein 1 (648 aa).

The interval 1–45 (MGTNPVHGLPFLPGSSFTDSTKTAFHRSQTLNYRNGYAVVRRPTM) is required for its localization in the mitotic spindle and interaction with alpha-tubulin. DM10 domains are found at residues 93–198 (DKKV…ESQG), 239–359 (DKQV…KDKF), and 416–520 (DNKV…ESNA). The 36-residue stretch at 582–617 (SYKENLRETFQMYDKDESGYVDRETFFKICETLNVP) folds into the EF-hand domain.

As to quaternary structure, microtubule inner protein component of sperm flagellar doublet microtubules. Interacts with the C-terminus of CACNA1E. Interacts with alpha-tubulin. In terms of tissue distribution, expressed in adult brain including hippocampus, cerebellum, cerebral cortex, thalamus, hypothalamus, amygdala and upper brainstem. Expressed in soma and dentrites of pyramidal neurons of the hippocampal CA1 region, pyramidal neurons of the cerebral cortex and Purkinje cells of cerebellum. Highly expressed in testis, trachea, and oviduct, moderately in lung, and slightly in brain. Highly expressed in sperm flagella and tracheal cilia (at protein level).

It localises to the cytoplasm. The protein localises to the cytoskeleton. It is found in the cilium axoneme. The protein resides in the flagellum axoneme. Its subcellular location is the microtubule organizing center. It localises to the centrosome. The protein localises to the spindle. It is found in the spindle pole. Its function is as follows. Microtubule inner protein (MIP) part of the dynein-decorated doublet microtubules (DMTs) in cilia axoneme, which is required for motile cilia beating. Microtubule-associated protein which regulates cell division and neuronal migration during cortical development. Necessary for radial and tangential cell migration during brain development, possibly acting as a regulator of cell morphology and process formation during migration. May enhance calcium influx through CACNA1E and stimulate programmed cell death. Overexpression of EFHC1 in hippocampal primary culture neurons induced apoptosis. This Mus musculus (Mouse) protein is EF-hand domain-containing protein 1 (Efhc1).